We begin with the raw amino-acid sequence, 546 residues long: Choline oxidase (546 aa).

Residues serine 23–alanine 24, glutamate 44, tryptophan 71, alanine 90–valine 92, cysteine 96–isoleucine 103, alanine 232, and tyrosine 465 contribute to the FAD site. Histidine 99 is subject to Tele-8alpha-FAD histidine. The active-site Proton acceptor is histidine 466. FAD is bound by residues alanine 500 and asparagine 510 to asparagine 512.

It belongs to the GMC oxidoreductase family. In terms of assembly, homodimer. FAD serves as cofactor.

It catalyses the reaction choline + 2 O2 + H2O = glycine betaine + 2 H2O2 + H(+). It participates in amine and polyamine biosynthesis; betaine biosynthesis via choline pathway; betaine from choline: step 1/1. Catalyzes the two-step oxidative conversion of choline to glycine-betaine with betaine aldehyde as an intermediate. Glycine-betaine accumulates to high levels in the cytoplasm of cells to prevent dehydration and plasmolysis in adverse hyperosmotic environments. Accepts either choline or the reaction intermediate betaine-aldehyde as substrate. The chain is Choline oxidase (codA) from Arthrobacter globiformis.